Here is a 446-residue protein sequence, read N- to C-terminus: SWI/SNF chromatin-remodeling accessory subunit 1 (446 aa).

Residues 1–53 (MQTQARPPVPQGPRFNHPATPQQVRRPINAPLPGQTAQIQGNRGPQPPKKKKR) are disordered. Residues 220–297 (YQPMKFKLHP…PQRLHQLLQQ (78 aa)) enclose the SWIB/MDM2 domain.

This sequence belongs to the SMARCD family. In terms of assembly, component of the multiprotein chromatin-remodeling complexes SWI/SNF: SWI/SNF-A (BAF), SWI/SNF-B (PBAF) and related complexes. The canonical complex contains a catalytic subunit swsn-4, core subunits swsn-1 and swsn-5, and accessory subunits swsn-3, swsn-6, phf-10, dpff-1, swsn-9 and either ham-3/swsn-2.1 or swsn-2.2. May interact with blmp-1. As to expression, broadly expressed in all cell types.

It localises to the nucleus. Its function is as follows. Involved in transcriptional activation and repression of select genes by chromatin remodeling (alteration of DNA-nucleosome topology). Component of SWI/SNF chromatin remodeling complexes that carry out key enzymatic activities, changing chromatin structure by altering DNA-histone contacts within a nucleosome in an ATP-dependent manner. Required for the blmp-1-mediated transcriptional activation or repression of several hypodermal genes such as bed-3. Involved in regulating differentiation, migration and axon pathfinding of specific serotonergic neurons (HSNs). Probably regulates vulva development through the let-60/Ras pathway. May be involved in regulation of developmental processes in the embryo driven by the Wnt pathway. Involved in gonadogenesis. The sequence is that of SWI/SNF chromatin-remodeling accessory subunit 1 from Caenorhabditis elegans.